Reading from the N-terminus, the 239-residue chain is Probable transcriptional regulatory protein Ajs_1898 (239 aa).

Positions 1 to 21 (MAGHSKWANIQHRKGRQDEKR) are disordered.

Belongs to the TACO1 family.

It localises to the cytoplasm. The polypeptide is Probable transcriptional regulatory protein Ajs_1898 (Acidovorax sp. (strain JS42)).